Reading from the N-terminus, the 332-residue chain is Methionyl-tRNA formyltransferase (332 aa).

124–127 serves as a coordination point for (6S)-5,6,7,8-tetrahydrofolate; sequence SLLP.

It belongs to the Fmt family.

The catalysed reaction is L-methionyl-tRNA(fMet) + (6R)-10-formyltetrahydrofolate = N-formyl-L-methionyl-tRNA(fMet) + (6S)-5,6,7,8-tetrahydrofolate + H(+). In terms of biological role, attaches a formyl group to the free amino group of methionyl-tRNA(fMet). The formyl group appears to play a dual role in the initiator identity of N-formylmethionyl-tRNA by promoting its recognition by IF2 and preventing the misappropriation of this tRNA by the elongation apparatus. This chain is Methionyl-tRNA formyltransferase, found in Polynucleobacter asymbioticus (strain DSM 18221 / CIP 109841 / QLW-P1DMWA-1) (Polynucleobacter necessarius subsp. asymbioticus).